A 931-amino-acid chain; its full sequence is Protein translocase subunit SecA (931 aa).

ATP contacts are provided by residues Q87, 105–109 (GEGKT), and D515. Positions 915, 917, 926, and 927 each coordinate Zn(2+).

It belongs to the SecA family. In terms of assembly, monomer and homodimer. Part of the essential Sec protein translocation apparatus which comprises SecA, SecYEG and auxiliary proteins SecDF-YajC and YidC. Requires Zn(2+) as cofactor.

It localises to the cell inner membrane. Its subcellular location is the cytoplasm. The enzyme catalyses ATP + H2O + cellular proteinSide 1 = ADP + phosphate + cellular proteinSide 2.. Part of the Sec protein translocase complex. Interacts with the SecYEG preprotein conducting channel. Has a central role in coupling the hydrolysis of ATP to the transfer of proteins into and across the cell membrane, serving both as a receptor for the preprotein-SecB complex and as an ATP-driven molecular motor driving the stepwise translocation of polypeptide chains across the membrane. The polypeptide is Protein translocase subunit SecA (Burkholderia ambifaria (strain ATCC BAA-244 / DSM 16087 / CCUG 44356 / LMG 19182 / AMMD) (Burkholderia cepacia (strain AMMD))).